A 224-amino-acid chain; its full sequence is Synaptonemal complex protein 3 (224 aa).

Coiled-coil stretches lie at residues 63–97 and 137–171; these read RVKC…WEER and HDSM…QSST.

As to quaternary structure, interacts with gras-1. Interacts with brc-1 and brd-1.

It localises to the chromosome. Its function is as follows. Plays a role in early meiotic events; during prophase I contributes to synaptonemal complex (SC) assembly, synapsis and chiasmata formation and stabilization of homologous chromosomes pairing. Required for restricting SC assembly to bridge paired chromosome axes. Required for the timely progression of meiotic crossover recombination. Required for the synapsis checkpoint. In Caenorhabditis elegans, this protein is Synaptonemal complex protein 3.